Here is a 175-residue protein sequence, read N- to C-terminus: Peptide deformylase (175 aa).

Fe cation contacts are provided by C96 and H138. E139 is an active-site residue. H142 provides a ligand contact to Fe cation.

This sequence belongs to the polypeptide deformylase family. The cofactor is Fe(2+).

The enzyme catalyses N-terminal N-formyl-L-methionyl-[peptide] + H2O = N-terminal L-methionyl-[peptide] + formate. Functionally, removes the formyl group from the N-terminal Met of newly synthesized proteins. Requires at least a dipeptide for an efficient rate of reaction. N-terminal L-methionine is a prerequisite for activity but the enzyme has broad specificity at other positions. This Rhodopseudomonas palustris (strain BisB18) protein is Peptide deformylase.